The sequence spans 151 residues: Allatostatin-A (151 aa).

An N-terminal signal peptide occupies residues 1–21 (MNSLHAHLLLLAVCCVGYIAS). Positions 22–54 (SPVIGQDQRSGDSDADVLLAADEMADNGGDNID) are excised as a propeptide. 3 positions are modified to leucine amide: Leu64, Leu88, and Leu99. The propeptide occupies 103–135 (SDYDYDQDNEIDYRVPPANYLAAERAVRPGRQN). The interval 131–151 (PGRQNKRTTRPQPFNFGLGRR) is disordered. At Leu148 the chain carries Leucine amide.

The protein belongs to the allatostatin family.

It is found in the secreted. Its function is as follows. May act as a neurotransmitter or neuromodulator. This Drosophila melanogaster (Fruit fly) protein is Allatostatin-A (AstA).